A 92-amino-acid polypeptide reads, in one-letter code: N(2)-fixation sustaining protein CowN (92 aa).

Belongs to the CowN family.

In terms of biological role, is required to sustain N(2)-dependent growth in the presence of low levels of carbon monoxide (CO). Probably acts by protecting the N(2) fixation ability of the nitrogenase complex, which is inactivated in the presence of CO. The protein is N(2)-fixation sustaining protein CowN of Rhodopseudomonas palustris (strain HaA2).